The following is a 420-amino-acid chain: Protein ECERIFERUM 26-like (420 aa).

It belongs to the plant acyltransferase family. In terms of tissue distribution, highly expressed in flowers. Expressed in leaves.

In terms of biological role, involved in biosynthesis of the epicuticular wax. Plays a role in very-long-chain fatty acid (VLCFA) biosynthesis and is required for VLCFA elongation in leaf. Despite its classification as a BAHD acyltransferase based on sequence homology, CER26L does not seem to share the catalytic mechanism of the members of the BAHD family. This Arabidopsis thaliana (Mouse-ear cress) protein is Protein ECERIFERUM 26-like (CER26L).